The sequence spans 113 residues: UPF0122 protein LCA_0713 (113 aa).

Belongs to the UPF0122 family.

Its function is as follows. Might take part in the signal recognition particle (SRP) pathway. This is inferred from the conservation of its genetic proximity to ftsY/ffh. May be a regulatory protein. The polypeptide is UPF0122 protein LCA_0713 (Latilactobacillus sakei subsp. sakei (strain 23K) (Lactobacillus sakei subsp. sakei)).